A 366-amino-acid polypeptide reads, in one-letter code: Latent membrane protein 1 (366 aa).

At 1 to 23 (MERDLERGPPGPPRPPLGPPLSS) the chain is on the cytoplasmic side. Residues 24–44 (SIGLALLLLLLALLFWLYIVL) form a helical membrane-spanning segment. At 45 to 51 (SNWTGGA) the chain is on the extracellular side. The helical transmembrane segment at 52-72 (LLVLYSFALMLIIIILIIFIF) threads the bilayer. Topologically, residues 73–75 (RRD) are cytoplasmic. The helical transmembrane segment at 76–96 (LLCPLGGLGLLLLMVTLLLIA) threads the bilayer. Over 97–106 (LWNLHGQALY) the chain is Extracellular. A helical membrane pass occupies residues 107–127 (LGIVLFIFGCLLVLGLWIYFL). Topologically, residues 128 to 139 (EILWRLGATIWQ) are cytoplasmic. The helical transmembrane segment at 140–160 (LLAFILAFFLAIILLIIALYL) threads the bilayer. The Extracellular portion of the chain corresponds to 161 to 163 (QQN). The helical transmembrane segment at 164-184 (WWTLLVDLLWLLLFMAILIWM) threads the bilayer. At 185–366 (YFHGPRHTDE…HGPVQLSYYD (182 aa)) the chain is on the cytoplasmic side. Positions 194 to 232 (EHHHDDSLPHPQQATDDSSHESDSNSNEGRHHLLVSGAG) are CTAR1. Residues 194 to 366 (EHHHDDSLPH…HGPVQLSYYD (173 aa)) are disordered. Positions 204 to 208 (PQQAT) match the Interaction with host TRAF proteins motif. Residues 210–224 (DSSHESDSNSNEGRH) are compositionally biased toward basic and acidic residues. Composition is skewed to low complexity over residues 251–267 (NGPQ…PQDP) and 337–346 (PHLPTLLLGT). The CTAR2 stretch occupies residues 332–366 (GGGGDPHLPTLLLGTSGSGGDDDDPHGPVQLSYYD).

It belongs to the herpesviridae LMP-1 family. Interacts (via PXQXT motif) with host tumor necrosis factor receptor-associated factor (TRAF) proteins TRAF1, TRAF2, TRAF3 and TRAF5. Interacts with human protein ZMYND11; leading to negatively regulate NF-kappa-B activation. Interacts with host UBE2I; this interaction induces the sumoylation of various cellular proteins. Interacts with host IRF7. Ubiquitinated on the N-terminus.

It localises to the host cell membrane. Functionally, acts as a CD40 functional homolog to prevent apoptosis of infected B-lymphocytes and drive their proliferation. Functions as a constitutively active tumor necrosis factor receptor that induces the activation of several signaling pathways, including those of the NF-kappa-B family. LMP1 signaling leads to up-regulation of antiapoptotic proteins and provide growth signals in latently infected cells. Interacts with host UBE2I and subsequently affects the sumoylation state of several cellular proteins. For example, induces the sumoylation of host IRF7 thereby limiting its transcriptional activity and modulating the activation of innate immune responses. Also inhibits host IFN-alpha-stimulated STAT2 nuclear translocation and interferon-stimulated response element transcriptional activity by interacting with and inhibiting host TYK2. Induces SUMO expression during viral latency thereby dysregulating the host sumoylation processes. In Homo sapiens (Human), this protein is Latent membrane protein 1 (LMP1).